We begin with the raw amino-acid sequence, 195 residues long: Molybdenum cofactor guanylyltransferase (195 aa).

Residues 12 to 14 (LAG), Lys25, Asn53, Asp70, and Asp100 contribute to the GTP site. Asp100 is a Mg(2+) binding site.

Belongs to the MobA family. In terms of assembly, monomer. The cofactor is Mg(2+).

It localises to the cytoplasm. The catalysed reaction is Mo-molybdopterin + GTP + H(+) = Mo-molybdopterin guanine dinucleotide + diphosphate. Transfers a GMP moiety from GTP to Mo-molybdopterin (Mo-MPT) cofactor (Moco or molybdenum cofactor) to form Mo-molybdopterin guanine dinucleotide (Mo-MGD) cofactor. This chain is Molybdenum cofactor guanylyltransferase, found in Vibrio parahaemolyticus serotype O3:K6 (strain RIMD 2210633).